The primary structure comprises 407 residues: Biotin synthase (407 aa).

The Radical SAM core domain maps to 47–277; the sequence is WFGRRVKLNY…DVEVRIAGGR (231 aa). [4Fe-4S] cluster is bound by residues Cys-65, Cys-69, and Cys-72. Cys-109, Cys-142, Cys-202, and Arg-272 together coordinate [2Fe-2S] cluster. Residues 368–407 are disordered; that stretch reads GGGVCAPAPAATTPRPAEEPRTDLVAVRRRGAGTDLAPNA. Residues 373–382 show a composition bias toward low complexity; the sequence is APAPAATTPR.

This sequence belongs to the radical SAM superfamily. Biotin synthase family. In terms of assembly, homodimer. The cofactor is [4Fe-4S] cluster. [2Fe-2S] cluster is required as a cofactor.

The enzyme catalyses (4R,5S)-dethiobiotin + (sulfur carrier)-SH + 2 reduced [2Fe-2S]-[ferredoxin] + 2 S-adenosyl-L-methionine = (sulfur carrier)-H + biotin + 2 5'-deoxyadenosine + 2 L-methionine + 2 oxidized [2Fe-2S]-[ferredoxin]. It participates in cofactor biosynthesis; biotin biosynthesis; biotin from 7,8-diaminononanoate: step 2/2. Catalyzes the conversion of dethiobiotin (DTB) to biotin by the insertion of a sulfur atom into dethiobiotin via a radical-based mechanism. The chain is Biotin synthase from Streptomyces coelicolor (strain ATCC BAA-471 / A3(2) / M145).